A 1374-amino-acid polypeptide reads, in one-letter code: F-actin-uncapping protein LRRC16A (1374 aa).

M1 carries the N-acetylmethionine modification. S122 is subject to Phosphoserine. LRR repeat units lie at residues 245–269 (SNRL…LAGA), 275–298 (NSGL…SLSI), 304–327 (PKGL…SLCQ), 336–363 (ASTL…FLAQ), 391–418 (LQCL…SFKQ), 423–447 (SLAL…LLLG), 485–510 (IHNI…VWLS), 547–570 (DSPL…IINA), 574–597 (NTSL…MLAK), and 658–682 (LQKI…AYRL). The stretch at 714-738 (GDAIQEDLKAAERLMRDAKNSKTLL) forms a coiled coil. T920 is subject to Phosphothreonine. Disordered stretches follow at residues 961 to 982 (PFPS…PSEE) and 1040 to 1374 (KMDC…FIFV). Residues 962-985 (FPSVRQEKRSSGLISELPSEEGRR) form an LRR 11 repeat. The segment at 962–1084 (FPSVRQEKRS…LIKSRSRSER (123 aa)) is inhibits capping activity of CP. S972 is modified (phosphoserine). The span at 1040-1064 (KMDCKRSSSRSSDAHELGEGDEKKK) shows a compositional bias: basic and acidic residues. The tract at residues 1058–1092 (EGDEKKKRDSRRSGFLNLIKSRSRSERPPTVLMTE) is necessary for localization at the cell membrane. A Phosphoserine modification is found at S1096. 2 stretches are compositionally biased toward basic and acidic residues: residues 1108–1132 (TTRK…KTPE) and 1141–1150 (EAGRAERSDS). Residues 1191–1204 (VISQDPSSPVSCNT) show a composition bias toward polar residues. At T1229 the chain carries Phosphothreonine. The segment covering 1232–1244 (KNAKAEPRVDGGC) has biased composition (basic and acidic residues). Residues 1245–1263 (RSRSSSSMPTSPKPLLQSP) show a composition bias toward low complexity. A phosphoserine mark is found at S1281, S1289, S1291, S1295, S1319, S1328, and S1335. Positions 1317-1330 (QNSSQSSPRSFSQE) are enriched in low complexity. Residues 1343–1356 (QEQKQRSSGKDGHQ) are compositionally biased toward basic and acidic residues. Residue S1363 is modified to Phosphoserine.

This sequence belongs to the CARMIL family. In terms of assembly, homodimer. Interacts (via C-terminus) with heterodimeric capping protein (CP); this interaction uncaps barbed ends capped by CP, enhances barbed-end actin polymerization and promotes lamellipodial formation and cell migration. Interacts with MYO1E. Interacts with TRIO.

The protein localises to the cytoplasm. Its subcellular location is the cytoskeleton. It localises to the cell membrane. It is found in the cell projection. The protein resides in the lamellipodium. Cell membrane-cytoskeleton-associated protein that plays a role in the regulation of actin polymerization at the barbed end of actin filaments. Prevents F-actin heterodimeric capping protein (CP) activity at the leading edges of migrating cells, and hence generates uncapped barbed ends and enhances actin polymerization, however, seems unable to nucleate filaments. Plays a role in lamellipodial protrusion formations and cell migration. The sequence is that of F-actin-uncapping protein LRRC16A from Mus musculus (Mouse).